The chain runs to 90 residues: Probable Fe(2+)-trafficking protein (90 aa).

Belongs to the Fe(2+)-trafficking protein family. As to quaternary structure, monomer.

Its function is as follows. Could be a mediator in iron transactions between iron acquisition and iron-requiring processes, such as synthesis and/or repair of Fe-S clusters in biosynthetic enzymes. This Yersinia pseudotuberculosis serotype O:1b (strain IP 31758) protein is Probable Fe(2+)-trafficking protein.